The primary structure comprises 527 residues: V(D)J recombination-activating protein 2 (527 aa).

Residues 359–380 are disordered; that stretch reads QKIVSNSQTSTEDPGDSTPFED. Positions 361–370 are enriched in polar residues; it reads IVSNSQTSTE. Positions 371–380 are enriched in acidic residues; that stretch reads DPGDSTPFED. The PHD-type; atypical zinc-finger motif lies at 416–484; the sequence is WITCCPTCDV…KYYCNEHVQI (69 aa). Residues Cys419, Cys423, Cys446, His452, His455, Cys458, Cys478, and His481 each coordinate Zn(2+). Residues 490-511 form a disordered region; the sequence is TPKRNPPLQKPPMKSLHKKGSG.

The protein belongs to the RAG2 family. As to quaternary structure, component of the RAG complex composed of core components RAG1 and RAG2, and associated component HMGB1 or HMGB2. As to expression, maturing lymphoid cells.

The protein localises to the nucleus. Its function is as follows. Core component of the RAG complex, a multiprotein complex that mediates the DNA cleavage phase during V(D)J recombination. V(D)J recombination assembles a diverse repertoire of immunoglobulin and T-cell receptor genes in developing B and T-lymphocytes through rearrangement of different V (variable), in some cases D (diversity), and J (joining) gene segments. DNA cleavage by the RAG complex occurs in 2 steps: a first nick is introduced in the top strand immediately upstream of the heptamer, generating a 3'-hydroxyl group that can attack the phosphodiester bond on the opposite strand in a direct transesterification reaction, thereby creating 4 DNA ends: 2 hairpin coding ends and 2 blunt, 5'-phosphorylated ends. The chromatin structure plays an essential role in the V(D)J recombination reactions and the presence of histone H3 trimethylated at 'Lys-4' (H3K4me3) stimulates both the nicking and haipinning steps. The RAG complex also plays a role in pre-B cell allelic exclusion, a process leading to expression of a single immunoglobulin heavy chain allele to enforce clonality and monospecific recognition by the B-cell antigen receptor (BCR) expressed on individual B-lymphocytes. The introduction of DNA breaks by the RAG complex on one immunoglobulin allele induces ATM-dependent repositioning of the other allele to pericentromeric heterochromatin, preventing accessibility to the RAG complex and recombination of the second allele. In the RAG complex, RAG2 is not the catalytic component but is required for all known catalytic activities mediated by RAG1. It probably acts as a sensor of chromatin state that recruits the RAG complex to H3K4me3. This is V(D)J recombination-activating protein 2 (Rag2) from Mus musculus (Mouse).